The following is a 267-amino-acid chain: MSLSLDGVDLVHADGQRALADIRLRLAAGERVALIGPSGAGKTSLLRVLASQWRPSAGRVELLGEEPWALSAAARQRLRARIGLVHQAPPLPPRQRVVSAVLAGRLGQWPLWKSLASLVYPLDRAGAHDALQRLDLGDKLFQRCDQLSGGQLQRVGIARVLYQRAELILADEPVSAMDPVLAGHTLALLNREAAARGSTLLASLHAVDLALQHFPRVIGLRAGRIAFDLPAGEVDRAALDALYANEQLQAERASPASEPAVVHIPRC.

Residues L3–Q247 form the ABC transporter domain. G36–T43 lines the ATP pocket.

This sequence belongs to the ABC transporter superfamily. Phosphonates importer (TC 3.A.1.9.1) family. In terms of assembly, the complex is composed of two ATP-binding proteins (PhnC), two transmembrane proteins (PhnE) and a solute-binding protein (PhnD).

It is found in the cell inner membrane. The catalysed reaction is phosphonate(out) + ATP + H2O = phosphonate(in) + ADP + phosphate + H(+). Its function is as follows. Part of the ABC transporter complex PhnCDE involved in phosphonates import. Responsible for energy coupling to the transport system. The chain is Phosphonates import ATP-binding protein PhnC 2 from Pseudomonas aeruginosa (strain UCBPP-PA14).